The primary structure comprises 865 residues: Leucine--tRNA ligase (865 aa).

The 'HIGH' region motif lies at 48–58; sequence PYPSGQLHVGH. The short motif at 626–630 is the 'KMSKS' region element; sequence KMSKS. Lys629 serves as a coordination point for ATP.

This sequence belongs to the class-I aminoacyl-tRNA synthetase family.

It localises to the cytoplasm. It catalyses the reaction tRNA(Leu) + L-leucine + ATP = L-leucyl-tRNA(Leu) + AMP + diphosphate. This is Leucine--tRNA ligase from Gluconobacter oxydans (strain 621H) (Gluconobacter suboxydans).